The primary structure comprises 197 residues: Nucleoside triphosphate pyrophosphatase (197 aa).

The Proton acceptor role is filled by Asp-71.

Belongs to the Maf family. The cofactor is a divalent metal cation.

The protein localises to the cytoplasm. The enzyme catalyses a ribonucleoside 5'-triphosphate + H2O = a ribonucleoside 5'-phosphate + diphosphate + H(+). It catalyses the reaction a 2'-deoxyribonucleoside 5'-triphosphate + H2O = a 2'-deoxyribonucleoside 5'-phosphate + diphosphate + H(+). Its function is as follows. Nucleoside triphosphate pyrophosphatase. May have a dual role in cell division arrest and in preventing the incorporation of modified nucleotides into cellular nucleic acids. This Synechococcus sp. (strain JA-2-3B'a(2-13)) (Cyanobacteria bacterium Yellowstone B-Prime) protein is Nucleoside triphosphate pyrophosphatase.